A 24-amino-acid chain; its full sequence is Fraternine (24 aa).

A disulfide bridge links Cys11 with Cys24. Cys24 is subject to Cysteine amide.

As to expression, expressed by the venom gland.

The protein localises to the secreted. In terms of biological role, wasp venom peptide that acts as a potent mast cell degranulating peptide without hemolytic activity. Shows neuroprotective effect, since it prevents the death of dopaminergic neurons of the brain substantia nigra region and recovers motor deficit in a 6-hydroxydopamine (6-OHDA)-induced murine model of Parkinson disease. This chain is Fraternine, found in Parachartergus fraternus (Artistic wasp).